A 623-amino-acid chain; its full sequence is Glutathione import ATP-binding protein GsiA (623 aa).

2 consecutive ABC transporter domains span residues Val-15 to Leu-269 and Leu-314 to Leu-564. ATP contacts are provided by residues Gly-49–Ser-56 and Gly-357–Ser-364.

It belongs to the ABC transporter superfamily. Glutathione importer (TC 3.A.1.5.11) family. The complex is composed of two ATP-binding proteins (GsiA), two transmembrane proteins (GsiC and GsiD) and a solute-binding protein (GsiB).

Its subcellular location is the cell inner membrane. The catalysed reaction is glutathione(out) + ATP + H2O = glutathione(in) + ADP + phosphate + H(+). Part of the ABC transporter complex GsiABCD involved in glutathione import. Responsible for energy coupling to the transport system. The protein is Glutathione import ATP-binding protein GsiA of Shigella flexneri.